Here is a 111-residue protein sequence, read N- to C-terminus: Transcription factor S (111 aa).

The Zn(2+) site is built by Cys4, Cys7, Cys24, Cys27, Cys72, Cys75, Cys100, and Cys103. The C4-type zinc-finger motif lies at 4–27 (CPKCGSMMMPRKENGKTVYKCSKC). Residues 68–108 (RGISCPSCGNDEAYFWILQTRSADEPATRFYKCTKCGKVWR) form a TFIIS-type zinc finger.

It belongs to the archaeal RpoM/eukaryotic RPA12/RPB9/RPC11 RNA polymerase family.

In terms of biological role, induces RNA cleavage activity in the RNA polymerase. In its presence, the cleavage activity of the RNA polymerase truncates the RNA back to position +15 in a stepwise manner by releasing mainly dinucleotides from the 3'-end of the nascent RNA. The truncated RNAs are able to continue elongation. Involved in transcriptional proofreading and fidelity. Misincorporation of nucleotides during elongation of transcription leads to arrested elongation complexes which are rescued by TFS-promoted removal of a dinucleotide from the 3'-end. TFS is able to induce a cleavage resynthesis cycle in stalled elongation complexes (resulting from the next missing nucleotide or a reduced incorporation rate of a wrong nucleotide) preventing misincorporation and enabling proofreading in a post-incorporation manner. Pausing of elongation complexes is the main determinant of TFS-induced RNA cleavage. The protein is Transcription factor S of Sulfolobus acidocaldarius (strain ATCC 33909 / DSM 639 / JCM 8929 / NBRC 15157 / NCIMB 11770).